A 371-amino-acid polypeptide reads, in one-letter code: MTSIDPTHLGKKVIVGMSGGVDSSVSAYLLMKQGYQVEGLFMKNWEEDDTDEYCAAADDLKDAQAVCDKLGIKLHTVNFASEYWDNVFEYFLAEYKAGRTPNPDIMCNKEIKFKAFLEFADEILDADYIAMGHYVRRRDIDGTSQMLRGVDGNKDQSYFLYTLSHEQVARSLFPVGELEKSEVRDIAKEMGLITHDKKDSTGICFIGERKFTDFLSTFLPAQPGNIETSEGEVIGQHQGLMYHTLGQRKGLGIGGLKNSSEDPWYVVEKDLVRNVLVVGQGGNHPRLMSNGLLANQLHWVDRKGPAEGAKITLKTRYRQHDVPCTVTYDSDDQIRVIFDEAVAAVTPGQSAVFYDGEICLGGGIIDVLIRD.

Residues 16 to 23 (GMSGGVDS) and methionine 42 contribute to the ATP site. Residues 102-104 (NPD) form an interaction with target base in tRNA region. The active-site Nucleophile is the cysteine 107. Cysteine 107 and cysteine 204 are disulfide-bonded. Glycine 132 contacts ATP. An interaction with tRNA region spans residues 154-156 (KDQ). Cysteine 204 serves as the catalytic Cysteine persulfide intermediate. An interaction with tRNA region spans residues 316 to 317 (RY).

The protein belongs to the MnmA/TRMU family.

The protein localises to the cytoplasm. It carries out the reaction S-sulfanyl-L-cysteinyl-[protein] + uridine(34) in tRNA + AH2 + ATP = 2-thiouridine(34) in tRNA + L-cysteinyl-[protein] + A + AMP + diphosphate + H(+). In terms of biological role, catalyzes the 2-thiolation of uridine at the wobble position (U34) of tRNA, leading to the formation of s(2)U34. The chain is tRNA-specific 2-thiouridylase MnmA from Shewanella piezotolerans (strain WP3 / JCM 13877).